The chain runs to 168 residues: Photosystem I assembly protein Ycf3 (168 aa).

TPR repeat units follow at residues 35 to 68 (AFAYYINGMSAQSEGNYAEALQNYYQAMHLEMDP), 72 to 105 (SYILYNIGIIHTSNGEHSKALEYYCRAIERNPFL), and 120 to 153 (GEQAIQQGDSEIAEAWFDQAAEYWKQARTLTPGN).

The protein belongs to the Ycf3 family.

Its subcellular location is the plastid membrane. Essential for the assembly of the photosystem I (PSI) complex. May act as a chaperone-like factor to guide the assembly of the PSI subunits. In Cuscuta gronovii (Common dodder), this protein is Photosystem I assembly protein Ycf3.